A 317-amino-acid chain; its full sequence is Carbonic anhydrase 5B, mitochondrial (317 aa).

Residues 1 to 33 constitute a mitochondrion transit peptide; that stretch reads MAVMNHLRVILQVSSSTLPWRRCWVPRLVPRRS. Residues 37–296 form the Alpha-carbonic anhydrase domain; sequence YTCTYRTRNR…LMNRTVRSSF (260 aa). Residues H130, H132, and H155 each contribute to the Zn(2+) site. Residue 235 to 236 coordinates substrate; that stretch reads TT.

It belongs to the alpha-carbonic anhydrase family. It depends on Zn(2+) as a cofactor. In terms of tissue distribution, expressed in the heart, liver, lung, kidney, testis, and skeletal muscle (at protein level).

Its subcellular location is the mitochondrion. The catalysed reaction is hydrogencarbonate + H(+) = CO2 + H2O. In terms of biological role, mitochondrial carbonic anhydrase that catalyzes the reversible conversion of carbon dioxide to bicarbonate/HCO3. The polypeptide is Carbonic anhydrase 5B, mitochondrial (Ca5b) (Mus musculus (Mouse)).